We begin with the raw amino-acid sequence, 408 residues long: Peptidase T (408 aa).

Residue His78 participates in Zn(2+) binding. Asp80 is an active-site residue. A Zn(2+)-binding site is contributed by Asp141. Glu175 acts as the Proton acceptor in catalysis. Residues Glu176, Asp198, and His380 each contribute to the Zn(2+) site.

It belongs to the peptidase M20B family. Requires Zn(2+) as cofactor.

It localises to the cytoplasm. It catalyses the reaction Release of the N-terminal residue from a tripeptide.. Its function is as follows. Cleaves the N-terminal amino acid of tripeptides. This chain is Peptidase T, found in Clostridium botulinum (strain Okra / Type B1).